We begin with the raw amino-acid sequence, 116 residues long: Ribonuclease P protein component (116 aa).

It belongs to the RnpA family. In terms of assembly, consists of a catalytic RNA component (M1 or rnpB) and a protein subunit.

It catalyses the reaction Endonucleolytic cleavage of RNA, removing 5'-extranucleotides from tRNA precursor.. Its function is as follows. RNaseP catalyzes the removal of the 5'-leader sequence from pre-tRNA to produce the mature 5'-terminus. It can also cleave other RNA substrates such as 4.5S RNA. The protein component plays an auxiliary but essential role in vivo by binding to the 5'-leader sequence and broadening the substrate specificity of the ribozyme. In Leuconostoc citreum (strain KM20), this protein is Ribonuclease P protein component.